The primary structure comprises 219 residues: ATP phosphoribosyltransferase (219 aa).

It belongs to the ATP phosphoribosyltransferase family. Short subfamily. As to quaternary structure, heteromultimer composed of HisG and HisZ subunits.

It localises to the cytoplasm. It carries out the reaction 1-(5-phospho-beta-D-ribosyl)-ATP + diphosphate = 5-phospho-alpha-D-ribose 1-diphosphate + ATP. It functions in the pathway amino-acid biosynthesis; L-histidine biosynthesis; L-histidine from 5-phospho-alpha-D-ribose 1-diphosphate: step 1/9. Functionally, catalyzes the condensation of ATP and 5-phosphoribose 1-diphosphate to form N'-(5'-phosphoribosyl)-ATP (PR-ATP). Has a crucial role in the pathway because the rate of histidine biosynthesis seems to be controlled primarily by regulation of HisG enzymatic activity. This Syntrophotalea carbinolica (strain DSM 2380 / NBRC 103641 / GraBd1) (Pelobacter carbinolicus) protein is ATP phosphoribosyltransferase.